The sequence spans 435 residues: 5-methylthioadenosine/S-adenosylhomocysteine deaminase (435 aa).

Residues H65 and H67 each coordinate Zn(2+). Residues E94, R150, and H189 each contribute to the substrate site. Zn(2+) is bound at residue H216. The substrate site is built by E219 and D304. Zn(2+) is bound at residue D304.

It belongs to the metallo-dependent hydrolases superfamily. MTA/SAH deaminase family. The cofactor is Zn(2+).

It catalyses the reaction S-adenosyl-L-homocysteine + H2O + H(+) = S-inosyl-L-homocysteine + NH4(+). The catalysed reaction is S-methyl-5'-thioadenosine + H2O + H(+) = S-methyl-5'-thioinosine + NH4(+). In terms of biological role, catalyzes the deamination of 5-methylthioadenosine and S-adenosyl-L-homocysteine into 5-methylthioinosine and S-inosyl-L-homocysteine, respectively. Is also able to deaminate adenosine. The polypeptide is 5-methylthioadenosine/S-adenosylhomocysteine deaminase (Bacillus cereus (strain ATCC 10987 / NRS 248)).